A 324-amino-acid polypeptide reads, in one-letter code: Ribosomal RNA small subunit methyltransferase H (324 aa).

S-adenosyl-L-methionine is bound by residues 41–43 (GGH), D60, Y87, D111, and Q118.

It belongs to the methyltransferase superfamily. RsmH family.

It localises to the cytoplasm. The catalysed reaction is cytidine(1402) in 16S rRNA + S-adenosyl-L-methionine = N(4)-methylcytidine(1402) in 16S rRNA + S-adenosyl-L-homocysteine + H(+). Specifically methylates the N4 position of cytidine in position 1402 (C1402) of 16S rRNA. This is Ribosomal RNA small subunit methyltransferase H from Nocardia farcinica (strain IFM 10152).